The primary structure comprises 67 residues: Brevinin-1CDYa (67 aa).

Positions 1–22 (MFTLKKSLLLIFFLGTINLSLC) are cleaved as a signal peptide. Positions 23-45 (EEERNADEEERRDDLEERDVEVE) are excised as a propeptide. An intrachain disulfide couples cysteine 61 to cysteine 67.

It belongs to the frog skin active peptide (FSAP) family. Brevinin subfamily. Expressed by the skin glands.

It is found in the secreted. In terms of biological role, antimicrobial peptide. Has low activity against the Gram-positive bacterium S.aureus (MIC=12.5 uM) and the Gram-negative bacterium E.coli (MIC=25 uM). Has weak hemolytic activity against human erythrocytes. The sequence is that of Brevinin-1CDYa from Rana dybowskii (Dybovsky's frog).